The following is a 338-amino-acid chain: Ketol-acid reductoisomerase (NADP(+)) (338 aa).

The 181-residue stretch at Thr2 to Thr182 folds into the KARI N-terminal Rossmann domain. Residues Tyr25–Gln28, Ser51, Ser53, and Asp83–Gln86 each bind NADP(+). The active site involves His108. Gly134 is an NADP(+) binding site. A KARI C-terminal knotted domain is found at Thr183 to Asn330. Mg(2+) is bound by residues Asp191, Glu195, Glu227, and Glu231. Ser252 serves as a coordination point for substrate.

The protein belongs to the ketol-acid reductoisomerase family. Requires Mg(2+) as cofactor.

It carries out the reaction (2R)-2,3-dihydroxy-3-methylbutanoate + NADP(+) = (2S)-2-acetolactate + NADPH + H(+). The catalysed reaction is (2R,3R)-2,3-dihydroxy-3-methylpentanoate + NADP(+) = (S)-2-ethyl-2-hydroxy-3-oxobutanoate + NADPH + H(+). It functions in the pathway amino-acid biosynthesis; L-isoleucine biosynthesis; L-isoleucine from 2-oxobutanoate: step 2/4. The protein operates within amino-acid biosynthesis; L-valine biosynthesis; L-valine from pyruvate: step 2/4. In terms of biological role, involved in the biosynthesis of branched-chain amino acids (BCAA). Catalyzes an alkyl-migration followed by a ketol-acid reduction of (S)-2-acetolactate (S2AL) to yield (R)-2,3-dihydroxy-isovalerate. In the isomerase reaction, S2AL is rearranged via a Mg-dependent methyl migration to produce 3-hydroxy-3-methyl-2-ketobutyrate (HMKB). In the reductase reaction, this 2-ketoacid undergoes a metal-dependent reduction by NADPH to yield (R)-2,3-dihydroxy-isovalerate. The polypeptide is Ketol-acid reductoisomerase (NADP(+)) (Clostridium botulinum (strain Eklund 17B / Type B)).